We begin with the raw amino-acid sequence, 272 residues long: 3-methyl-2-oxobutanoate hydroxymethyltransferase (272 aa).

2 residues coordinate Mg(2+): D52 and D91. 3-methyl-2-oxobutanoate is bound by residues 52-53 (DS), D91, and K121. Residue E123 coordinates Mg(2+). Catalysis depends on E190, which acts as the Proton acceptor.

The protein belongs to the PanB family. In terms of assembly, homodecamer; pentamer of dimers. It depends on Mg(2+) as a cofactor.

It is found in the cytoplasm. The catalysed reaction is 3-methyl-2-oxobutanoate + (6R)-5,10-methylene-5,6,7,8-tetrahydrofolate + H2O = 2-dehydropantoate + (6S)-5,6,7,8-tetrahydrofolate. It functions in the pathway cofactor biosynthesis; (R)-pantothenate biosynthesis; (R)-pantoate from 3-methyl-2-oxobutanoate: step 1/2. In terms of biological role, catalyzes the reversible reaction in which hydroxymethyl group from 5,10-methylenetetrahydrofolate is transferred onto alpha-ketoisovalerate to form ketopantoate. This chain is 3-methyl-2-oxobutanoate hydroxymethyltransferase, found in Flavobacterium johnsoniae (strain ATCC 17061 / DSM 2064 / JCM 8514 / BCRC 14874 / CCUG 350202 / NBRC 14942 / NCIMB 11054 / UW101) (Cytophaga johnsonae).